Here is a 269-residue protein sequence, read N- to C-terminus: MLFDVFQQYPAAMPVLATVGGLIIGSFLNVVIWRYPIMLRQQMAEFHGEMPSVQSKISLALPRSHCPHCQQTIRIRDNIPLLSWLMLKGRCRDCQAKISKRYPLVELLTALAFLLASLVWPESGWALAVMILSAWLIAASVIDLDHQWLPDVFTQGVLWTGLIAAWAQQSPLTLQDAVTGVLVGFIAFYSLRWIAGIVLRKEALGMGDVLLFAALGSWVGPLSLPNVALIASCCGLIYAVITKRGTTTLPFGPCLSLGGIATIYLQALF.

A run of 7 helical transmembrane segments spans residues 13 to 33 (MPVL…VVIW), 102 to 122 (YPLV…VWPE), 124 to 144 (GWAL…VIDL), 147 to 167 (QWLP…AAWA), 178 to 198 (VTGV…AGIV), 210 to 230 (LLFA…VALI), and 249 to 269 (LPFG…QALF).

The protein belongs to the peptidase A24 family.

It localises to the cell inner membrane. The enzyme catalyses Typically cleaves a -Gly-|-Phe- bond to release an N-terminal, basic peptide of 5-8 residues from type IV prepilin, and then N-methylates the new N-terminal amino group, the methyl donor being S-adenosyl-L-methionine.. In terms of biological role, cleaves type-4 fimbrial leader sequence and methylates the N-terminal (generally Phe) residue. This chain is Type 4 prepilin-like proteins leader peptide-processing enzyme, found in Escherichia coli O78:H11 (strain H10407 / ETEC).